A 168-amino-acid polypeptide reads, in one-letter code: 3-isopropylmalate dehydratase small subunit (168 aa).

The protein belongs to the LeuD family. LeuD type 2 subfamily. In terms of assembly, heterodimer of LeuC and LeuD.

It catalyses the reaction (2R,3S)-3-isopropylmalate = (2S)-2-isopropylmalate. Its pathway is amino-acid biosynthesis; L-leucine biosynthesis; L-leucine from 3-methyl-2-oxobutanoate: step 2/4. Its function is as follows. Catalyzes the isomerization between 2-isopropylmalate and 3-isopropylmalate, via the formation of 2-isopropylmaleate. This chain is 3-isopropylmalate dehydratase small subunit (leuD), found in Aquifex aeolicus (strain VF5).